We begin with the raw amino-acid sequence, 430 residues long: Serine/threonine-protein kinase Sgk1 (430 aa).

Positions 1-60 are necessary for localization to the mitochondria; it reads MTVKTEAARSTLTYSRMRGMVAILIAFMKQRRMGLNDFIQKLANNSYACKHPEVQSYLKI. The interval 66–92 is disordered; sequence PELMNANPSPPPSPSQQINLGPSSNPH. S74 bears the Phosphoserine mark. A Phosphoserine; by MAPK7 modification is found at S78. The span at 81–91 shows a compositional bias: polar residues; the sequence is QQINLGPSSNP. Residues 98 to 354 form the Protein kinase domain; that stretch reads FHFLKVIGKG…FMEIKSHIFF (257 aa). ATP-binding positions include 104–112 and K127; that span reads IGKGSFGKV. The Nuclear localization signal motif lies at 131 to 141; sequence KKAILKKKEEK. The active-site Proton acceptor is D222. T256 carries the post-translational modification Phosphothreonine; by PDPK1. Positions 355–430 constitute an AGC-kinase C-terminal domain; the sequence is SLINWDDLIN…SYAPPMDSFL (76 aa). T368 carries the phosphothreonine; by PKA modification. Phosphoserine is present on residues S396, S400, and S421.

The protein belongs to the protein kinase superfamily. AGC Ser/Thr protein kinase family. As to quaternary structure, homodimer; disulfide-linked. Forms a trimeric complex with FBXW7 and NOTCH1. Interacts with MAPK3/ERK1, MAPK1/ERK2, MAP2K1/MEK1, MAP2K2/MEK2, NEDD4, NEDD4L, MAPK7, CREB1, SLC9A3R2/NHERF2 and KCNJ1/ROMK1. Associates with the mammalian target of rapamycin complex 2 (mTORC2) via an interaction with MAPKAP1/SIN1. Interacts with MAPT/TAU. Post-translationally, regulated by phosphorylation. Activated by phosphorylation on Ser-421 by mTORC2, transforming it into a substrate for PDPK1 which phosphorylates it on Thr-256. Phosphorylation on Ser-396 and Ser-400 are also essential for its activity. Phosphorylation on Ser-78 by MAPK7 is required for growth factor-induced cell cycle progression. Ubiquitinated by NEDD4L; which promotes proteasomal degradation. Ubiquitinated by SYVN1 at the endoplasmic reticulum; which promotes rapid proteasomal degradation and maintains a high turnover rate in resting cells. Expressed in most tissues with highest levels in the ovary, thymus and lung. In the kidney, expressed within glomeruli of the cortex, at low levels in outer medulla and moderate levels in inner medulla and papilla.

Its subcellular location is the cytoplasm. The protein localises to the nucleus. It localises to the endoplasmic reticulum membrane. It is found in the cell membrane. The protein resides in the mitochondrion. The catalysed reaction is L-seryl-[protein] + ATP = O-phospho-L-seryl-[protein] + ADP + H(+). It catalyses the reaction L-threonyl-[protein] + ATP = O-phospho-L-threonyl-[protein] + ADP + H(+). Its activity is regulated as follows. Two specific sites, one in the kinase domain (Thr-256) and the other in the C-terminal regulatory region (Ser-421), need to be phosphorylated for its full activation. Phosphorylation at Ser-396 and Ser-400 are also essential for its activity. Activated by WNK1, WNK2, WNK3 and WNK4. Functionally, serine/threonine-protein kinase which is involved in the regulation of a wide variety of ion channels, membrane transporters, cellular enzymes, transcription factors, neuronal excitability, cell growth, proliferation, survival, migration and apoptosis. Plays an important role in cellular stress response. Contributes to regulation of renal Na(+) retention, renal K(+) elimination, salt appetite, gastric acid secretion, intestinal Na(+)/H(+) exchange and nutrient transport, insulin-dependent salt sensitivity of blood pressure, salt sensitivity of peripheral glucose uptake, cardiac repolarization and memory consolidation. Up-regulates Na(+) channels: SCNN1A/ENAC, SCN5A and ASIC1/ACCN2, K(+) channels: KCNJ1/ROMK1, KCNA1-5, KCNQ1-5 and KCNE1, epithelial Ca(2+) channels: TRPV5 and TRPV6, chloride channels: BSND, CLCN2 and CFTR, glutamate transporters: SLC1A3/EAAT1, SLC1A2 /EAAT2, SLC1A1/EAAT3, SLC1A6/EAAT4 and SLC1A7/EAAT5, amino acid transporters: SLC1A5/ASCT2, SLC38A1/SN1 and SLC6A19, creatine transporter: SLC6A8, Na(+)/dicarboxylate cotransporter: SLC13A2/NADC1, Na(+)-dependent phosphate cotransporter: SLC34A2/NAPI-2B, glutamate receptor: GRIK2/GLUR6. Up-regulates carriers: SLC9A3/NHE3, SLC12A1/NKCC2, SLC12A3/NCC, SLC5A3/SMIT, SLC2A1/GLUT1, SLC5A1/SGLT1 and SLC15A2/PEPT2. Regulates enzymes: GSK3A/B, PMM2 and Na(+)/K(+) ATPase, and transcription factors: CTNNB1 and nuclear factor NF-kappa-B. Stimulates sodium transport into epithelial cells by enhancing the stability and expression of SCNN1A/ENAC. This is achieved by phosphorylating the NEDD4L ubiquitin E3 ligase, promoting its interaction with 14-3-3 proteins, thereby preventing it from binding to SCNN1A/ENAC and targeting it for degradation. Regulates store-operated Ca(+2) entry (SOCE) by stimulating ORAI1 and STIM1. Regulates KCNJ1/ROMK1 directly via its phosphorylation or indirectly via increased interaction with SLC9A3R2/NHERF2. Phosphorylates MDM2 and activates MDM2-dependent ubiquitination of p53/TP53. Phosphorylates SLC2A4/GLUT4 and up-regulates its activity. Phosphorylates APBB1/FE65 and promotes its localization to the nucleus. Phosphorylates FBXW7 and plays an inhibitory role in the NOTCH1 signaling. Phosphorylates FOXO1 resulting in its relocalization from the nucleus to the cytoplasm. Phosphorylates FOXO3, promoting its exit from the nucleus and interference with FOXO3-dependent transcription. Phosphorylates BRAF and MAP3K3/MEKK3 and inhibits their activity. Phosphorylates SLC9A3/NHE3 in response to dexamethasone, resulting in its activation and increased localization at the cell membrane. Phosphorylates CREB1. Necessary for vascular remodeling during angiogenesis. Phosphorylates MAPT/TAU and mediates microtubule depolymerization and neurite formation in hippocampal neurons. Phosphorylates MAPK1/ERK2 and activates it by enhancing its interaction with MAP2K1/MEK1 and MAP2K2/MEK2. May also play an important role in the development of particular groups of neurons in the postnatal brain. This Rattus norvegicus (Rat) protein is Serine/threonine-protein kinase Sgk1 (Sgk1).